A 663-amino-acid polypeptide reads, in one-letter code: UvrABC system protein B (663 aa).

The region spanning 26–183 (DGLESGLAKQ…KRLAEMQYTR (158 aa)) is the Helicase ATP-binding domain. 39–46 (GVTGSGKT) is a binding site for ATP. A Beta-hairpin motif is present at residues 92 to 115 (YYDYYQPEAYVPASDTFIEKDASI). The region spanning 430–596 (QVDDLMSEIR…GINKSVEDIL (167 aa)) is the Helicase C-terminal domain. A UVR domain is found at 624–659 (AKQINALEKQMYAHAQNMEFELAAKIRDEYLLLKEQ).

Belongs to the UvrB family. Forms a heterotetramer with UvrA during the search for lesions. Interacts with UvrC in an incision complex.

The protein resides in the cytoplasm. Its function is as follows. The UvrABC repair system catalyzes the recognition and processing of DNA lesions. A damage recognition complex composed of 2 UvrA and 2 UvrB subunits scans DNA for abnormalities. Upon binding of the UvrA(2)B(2) complex to a putative damaged site, the DNA wraps around one UvrB monomer. DNA wrap is dependent on ATP binding by UvrB and probably causes local melting of the DNA helix, facilitating insertion of UvrB beta-hairpin between the DNA strands. Then UvrB probes one DNA strand for the presence of a lesion. If a lesion is found the UvrA subunits dissociate and the UvrB-DNA preincision complex is formed. This complex is subsequently bound by UvrC and the second UvrB is released. If no lesion is found, the DNA wraps around the other UvrB subunit that will check the other stand for damage. In Legionella pneumophila (strain Corby), this protein is UvrABC system protein B.